Here is a 163-residue protein sequence, read N- to C-terminus: Phosphopantetheine adenylyltransferase (163 aa).

T9 lines the substrate pocket. ATP contacts are provided by residues 9–10 and H17; that span reads TF. Substrate is bound by residues K41, L73, and R87. ATP-binding positions include 88–90, E98, and 123–129; these read GLR and YQFISGT.

This sequence belongs to the bacterial CoaD family. Homohexamer. It depends on Mg(2+) as a cofactor.

It is found in the cytoplasm. It catalyses the reaction (R)-4'-phosphopantetheine + ATP + H(+) = 3'-dephospho-CoA + diphosphate. The protein operates within cofactor biosynthesis; coenzyme A biosynthesis; CoA from (R)-pantothenate: step 4/5. Reversibly transfers an adenylyl group from ATP to 4'-phosphopantetheine, yielding dephospho-CoA (dPCoA) and pyrophosphate. The chain is Phosphopantetheine adenylyltransferase from Herminiimonas arsenicoxydans.